Here is a 734-residue protein sequence, read N- to C-terminus: NAD(P)H-quinone oxidoreductase subunit 5, chloroplastic (734 aa).

The next 16 membrane-spanning stretches (helical) occupy residues 9-29, 39-59, 89-109, 125-145, 147-167, 185-205, 224-244, 258-278, 280-300, 327-347, 354-374, 396-416, 425-445, 542-562, 605-625, and 714-734; these read WVIP…LFLV, IWAF…VHLS, IDPL…LVLI, FVYI…SNLI, IYFF…FWFT, GDFG…SLEF, LLTI…SAQF, TPIS…FLIA, LLPL…IGTL, LGYM…FHLI, ALLF…VGYS, TCFL…CFWS, WLYS…TAFY, LFPL…GIHF, SLAI…YSFF, and ISSY…FFLS.

Belongs to the complex I subunit 5 family. NDH is composed of at least 16 different subunits, 5 of which are encoded in the nucleus.

The protein localises to the plastid. It is found in the chloroplast thylakoid membrane. The enzyme catalyses a plastoquinone + NADH + (n+1) H(+)(in) = a plastoquinol + NAD(+) + n H(+)(out). It carries out the reaction a plastoquinone + NADPH + (n+1) H(+)(in) = a plastoquinol + NADP(+) + n H(+)(out). In terms of biological role, NDH shuttles electrons from NAD(P)H:plastoquinone, via FMN and iron-sulfur (Fe-S) centers, to quinones in the photosynthetic chain and possibly in a chloroplast respiratory chain. The immediate electron acceptor for the enzyme in this species is believed to be plastoquinone. Couples the redox reaction to proton translocation, and thus conserves the redox energy in a proton gradient. The protein is NAD(P)H-quinone oxidoreductase subunit 5, chloroplastic (ndhF) of Oryza nivara (Indian wild rice).